A 116-amino-acid chain; its full sequence is Tyrosine-protein phosphatase 10 (116 aa).

One can recognise a Tyrosine-protein phosphatase domain in the interval tryptophan 1–valine 116. Aspartate 86 provides a ligand contact to substrate.

It belongs to the protein-tyrosine phosphatase family.

It carries out the reaction O-phospho-L-tyrosyl-[protein] + H2O = L-tyrosyl-[protein] + phosphate. This chain is Tyrosine-protein phosphatase 10 (STY-10), found in Styela plicata (Wrinkled sea squirt).